The chain runs to 426 residues: Na(+)/H(+) antiporter 1 (426 aa).

Helical transmembrane passes span 1–21, 29–49, 57–77, 95–115, 120–140, 158–178, 184–204, 208–228, 236–256, 286–306, 309–329, and 382–402; these read MELM…SLVA, IPDI…LQII, IFEY…AFTM, ITFL…LNLP, VGYL…IPVF, IFND…FGLF, LIDL…LAKI, IIIH…GAML, LLPS…IMGL, VFIF…NYFI, LLVA…LGLI, and IAGT…ILEA.

The protein belongs to the monovalent cation:proton antiporter 1 (CPA1) transporter (TC 2.A.36) family.

Its subcellular location is the cell membrane. This is a Na(+)/H(+) antiporter. Can also transport lithium. The protein is Na(+)/H(+) antiporter 1 of Methanocaldococcus jannaschii (strain ATCC 43067 / DSM 2661 / JAL-1 / JCM 10045 / NBRC 100440) (Methanococcus jannaschii).